A 352-amino-acid chain; its full sequence is C-C chemokine receptor type 5 (352 aa).

Over 1-30 (MDYQVSSPTYDIDYYTSEPCQKINVKQIAA) the chain is Extracellular. Tyr3 bears the Sulfotyrosine mark. O-linked (GalNAc...) serine glycosylation is found at Ser6 and Ser7. Sulfotyrosine is present on residues Tyr10, Tyr14, and Tyr15. Intrachain disulfides connect Cys20-Cys269 and Cys101-Cys178. Residues 31-58 (RLLPPLYSLVFIFGFVGNILVVLILINC) traverse the membrane as a helical segment. The Cytoplasmic portion of the chain corresponds to 59–68 (KRLKSMTDIY). A helical membrane pass occupies residues 69-89 (LLNLAISDLLFLLTVPFWAHY). The Extracellular segment spans residues 90–102 (AAAQWDFGNTMCQ). The helical transmembrane segment at 103 to 124 (LLTGLYFIGFFSGIFFIILLTI) threads the bilayer. Residues 125 to 141 (DRYLAIVHAVFALKART) are Cytoplasmic-facing. A helical membrane pass occupies residues 142 to 166 (VTFGVVTSVITWVVAVFASLPGIIF). Topologically, residues 167 to 198 (TRSQREGLHYTCSSHFPYSQYQFWKNFQTLKM) are extracellular. A helical transmembrane segment spans residues 199–218 (VILGLVLPLLVMVICYSGIL). Residues 219–235 (KTLLRCRNEKKRHRAVR) are Cytoplasmic-facing. Residues 236 to 260 (LIFTIMIVYFLFWAPYNIVLLLNTF) form a helical membrane-spanning segment. Residues 261-277 (QEFFGLNNCSSSNRLDQ) lie on the Extracellular side of the membrane. Residues 278–301 (AMQVTETLGMTHCCINPIIYAFVG) traverse the membrane as a helical segment. Topologically, residues 302-352 (EKFRNYLLVFFQKHIAKRFCKCCSIFQQEAPERASSVYTRSTGEQEISVGL) are cytoplasmic. Residues Cys321, Cys323, and Cys324 are each lipidated (S-palmitoyl cysteine). Ser336, Ser337, Ser342, and Ser349 each carry phosphoserine; by BARK1.

It belongs to the G-protein coupled receptor 1 family. Interacts with PRAF2. Efficient ligand binding to CCL3/MIP-1alpha and CCL4/MIP-1beta requires sulfation, O-glycosylation and sialic acid modifications. Glycosylation on Ser-6 is required for efficient binding of CCL4. Interacts with GRK2. Interacts with ARRB1 and ARRB2. Interacts with CNIH4. Interacts with S100A4; this interaction stimulates T-lymphocyte chemotaxis. In terms of processing, sulfated on at least 2 of the N-terminal tyrosines. Sulfation is required for efficient binding of the chemokines, CCL3 and CCL4. Post-translationally, palmitoylation in the C-terminal is important for cell surface expression. Phosphorylation on serine residues in the C-terminal is stimulated by binding CC chemokines especially by APO-RANTES. In terms of processing, O-glycosylated, but not N-glycosylated. Ser-6 appears to be the major site even if Ser-7 may be also O-glycosylated. Also sialylated glycans present which contribute to chemokine binding. Thr-16 and Ser-17 may also be glycosylated and, if so, with small moieties such as a T-antigen.

The protein resides in the cell membrane. Receptor for a number of inflammatory CC-chemokines including CCL3/MIP-1-alpha, CCL4/MIP-1-beta and RANTES and subsequently transduces a signal by increasing the intracellular calcium ion level. May play a role in the control of granulocytic lineage proliferation or differentiation. Participates in T-lymphocyte migration to the infection site by acting as a chemotactic receptor. In Macaca fascicularis (Crab-eating macaque), this protein is C-C chemokine receptor type 5 (CCR5).